The primary structure comprises 429 residues: Glutamyl-tRNA reductase (429 aa).

Substrate-binding positions include 56–59 (TCNR), Ser-119, 124–126 (EPQ), and Gln-130. The Nucleophile role is filled by Cys-57. Residue 199–204 (GAGEMI) coordinates NADP(+).

It belongs to the glutamyl-tRNA reductase family. Homodimer.

The enzyme catalyses (S)-4-amino-5-oxopentanoate + tRNA(Glu) + NADP(+) = L-glutamyl-tRNA(Glu) + NADPH + H(+). It participates in porphyrin-containing compound metabolism; protoporphyrin-IX biosynthesis; 5-aminolevulinate from L-glutamyl-tRNA(Glu): step 1/2. Catalyzes the NADPH-dependent reduction of glutamyl-tRNA(Glu) to glutamate 1-semialdehyde (GSA). This is Glutamyl-tRNA reductase from Herminiimonas arsenicoxydans.